The sequence spans 1325 residues: Protein suppressor of sable (1325 aa).

2 disordered regions span residues 1-36 (MSVALADEPLIDLEEDLEDGEIDDDEEDEQQSSKIQ) and 74-326 (VCLQ…GGSN). Positions 9–30 (PLIDLEEDLEDGEIDDDEEDEQ) are enriched in acidic residues. The span at 119-131 (RSSNQDTSDQSLE) shows a compositional bias: polar residues. Residues 138 to 327 (ATANPLLQST…GQEKMGGSNR (190 aa)) are highly charged. Basic residues predominate over residues 149-158 (SSRRRKRKKE). A coiled-coil region spans residues 149 to 179 (SSRRRKRKKEREREQKKDKEQQNRSRRDEND). The segment covering 159-178 (REREQKKDKEQQNRSRRDEN) has biased composition (basic and acidic residues). The span at 236–246 (AGLGAGGGGGY) shows a compositional bias: gly residues. A coiled-coil region spans residues 276 to 296 (NEKEHQRGVNNRKRRDRDRLE). 2 C3H1-type zinc fingers span residues 330 to 357 (PRKLELCKFYLMDCCAKRDKCSYMHKEF) and 358 to 381 (PCKYYYLGMDCYAGDDCLFYHGEP). The stretch at 444–478 (KRQDHQMQQQQQQLQHQQLQQQQEQQQTQQQAAAD) forms a coiled coil. The span at 499–509 (KRKSRWTEKMG) shows a compositional bias: basic and acidic residues. Disordered stretches follow at residues 499-535 (KRKSRWTEKMGAKAAAGAAGSSERDSTSPDAKPLPPH), 588-622 (KAEDAKPQTQAELESSTPPSKRETEANNSNSKSNG), 639-695 (FSGN…PSVF), 710-745 (SARQLLPASATSPNQENAHLPGGDQSTHKSAPIGGG), 780-835 (AHSG…ALPP), 979-1058 (DLET…GGSK), 1143-1170 (EPNGNGAALGGGGDSGGGVGGGGGGGGV), and 1295-1325 (RGGHFPGGGSGGNGNGNNRNQRGGNHRNRNI). Residue S524 is modified to Phosphoserine. Positions 594-606 (PQTQAELESSTPP) are enriched in polar residues. Phosphothreonine is present on T604. The span at 644–668 (PLDDDRDDDEQLIIDDGNDSTAEED) shows a compositional bias: acidic residues. A Phosphoserine modification is found at S663. Position 664 is a phosphothreonine (T664). The segment covering 710–726 (SARQLLPASATSPNQEN) has biased composition (polar residues). Over residues 790 to 800 (SNENSNSNSHS) the composition is skewed to low complexity. Pro residues predominate over residues 1003–1015 (SVPPPSMRVPPPN). The span at 1021–1033 (PTVRTDPRRDPRR) shows a compositional bias: basic and acidic residues. The span at 1042-1056 (GASTANTTAPNASGG) shows a compositional bias: low complexity. Composition is skewed to gly residues over residues 1149–1170 (AALGGGGDSGGGVGGGGGGGGV) and 1295–1309 (RGGHFPGGGSGGNGN).

The protein belongs to the suppressor of sable family. Interacts with Wdr82.

The protein localises to the nucleus. It is found in the chromosome. In terms of biological role, RNA-binding protein that suppresses transcription of some RNAs. Together with Wdr82, part of a transcription termination checkpoint that promotes transcription termination of RNAs and their subsequent degradation by the nuclear exosome. Promotes transcription termination of aberrant RNAs, transcripts from genes containing a transposon inserted at their very 5' end or RNAs from heat-shock-inducible repetitive element. Binds RNA preferentially at a sequence that resembles a cryptic 5'-splice site. This Drosophila melanogaster (Fruit fly) protein is Protein suppressor of sable.